The primary structure comprises 548 residues: Membrane protein insertase YidC (548 aa).

The chain crosses the membrane as a helical span at residues 6-26 (NLLIIALLFVSFMIWQAWEQD). The tract at residues 28 to 52 (NPQPQQQTTQTTTTAAGSAADQGVP) is disordered. A compositionally biased stretch (low complexity) spans 29 to 41 (PQPQQQTTQTTTT). 4 consecutive transmembrane segments (helical) span residues 345 to 365 (KFIH…TFIV), 420 to 440 (LGGC…YYML), 458 to 478 (LSAQ…MFFI), and 499 to 519 (PVIF…YYIV).

It belongs to the OXA1/ALB3/YidC family. Type 1 subfamily. Interacts with the Sec translocase complex via SecD. Specifically interacts with transmembrane segments of nascent integral membrane proteins during membrane integration.

The protein resides in the cell inner membrane. Its function is as follows. Required for the insertion and/or proper folding and/or complex formation of integral membrane proteins into the membrane. Involved in integration of membrane proteins that insert both dependently and independently of the Sec translocase complex, as well as at least some lipoproteins. Aids folding of multispanning membrane proteins. This chain is Membrane protein insertase YidC, found in Klebsiella pneumoniae subsp. pneumoniae (strain ATCC 700721 / MGH 78578).